Here is a 362-residue protein sequence, read N- to C-terminus: Probable dual-specificity RNA methyltransferase RlmN (362 aa).

E105 acts as the Proton acceptor in catalysis. The Radical SAM core domain occupies H111–D344. Residues C118 and C349 are joined by a disulfide bond. C125, C129, and C132 together coordinate [4Fe-4S] cluster. Residues G175 to E176, S207, S230 to H232, and N306 each bind S-adenosyl-L-methionine. C349 functions as the S-methylcysteine intermediate in the catalytic mechanism.

Belongs to the radical SAM superfamily. RlmN family. It depends on [4Fe-4S] cluster as a cofactor.

It is found in the cytoplasm. It catalyses the reaction adenosine(2503) in 23S rRNA + 2 reduced [2Fe-2S]-[ferredoxin] + 2 S-adenosyl-L-methionine = 2-methyladenosine(2503) in 23S rRNA + 5'-deoxyadenosine + L-methionine + 2 oxidized [2Fe-2S]-[ferredoxin] + S-adenosyl-L-homocysteine. The enzyme catalyses adenosine(37) in tRNA + 2 reduced [2Fe-2S]-[ferredoxin] + 2 S-adenosyl-L-methionine = 2-methyladenosine(37) in tRNA + 5'-deoxyadenosine + L-methionine + 2 oxidized [2Fe-2S]-[ferredoxin] + S-adenosyl-L-homocysteine. Functionally, specifically methylates position 2 of adenine 2503 in 23S rRNA and position 2 of adenine 37 in tRNAs. This is Probable dual-specificity RNA methyltransferase RlmN from Bacillus mycoides (strain KBAB4) (Bacillus weihenstephanensis).